The sequence spans 234 residues: Large ribosomal subunit protein uL1 (234 aa).

This sequence belongs to the universal ribosomal protein uL1 family. In terms of assembly, part of the 50S ribosomal subunit.

In terms of biological role, binds directly to 23S rRNA. The L1 stalk is quite mobile in the ribosome, and is involved in E site tRNA release. Its function is as follows. Protein L1 is also a translational repressor protein, it controls the translation of the L11 operon by binding to its mRNA. The protein is Large ribosomal subunit protein uL1 of Helicobacter hepaticus (strain ATCC 51449 / 3B1).